Reading from the N-terminus, the 205-residue chain is Thymidylate kinase (205 aa).

11–18 (GVEGSGKS) contributes to the ATP binding site.

The protein belongs to the thymidylate kinase family.

The enzyme catalyses dTMP + ATP = dTDP + ADP. Phosphorylation of dTMP to form dTDP in both de novo and salvage pathways of dTTP synthesis. This is Thymidylate kinase from Ruthia magnifica subsp. Calyptogena magnifica.